Here is a 64-residue protein sequence, read N- to C-terminus: Metallothionein-A (64 aa).

This sequence belongs to the metallothionein superfamily. Type 4 family.

Its function is as follows. Metallothioneins have a high content of cysteine residues that bind various heavy metals. This is Metallothionein-A (MTA) from Strongylocentrotus purpuratus (Purple sea urchin).